A 198-amino-acid chain; its full sequence is Inosine triphosphate pyrophosphatase (198 aa).

Ala-2 carries the N-acetylalanine modification. 14-19 contacts ITP; the sequence is TGNAKK. Glu-44 is a binding site for Mg(2+). Residues Lys-56, 72-73, and Lys-89 contribute to the ITP site; that span reads DT. Ser-146 bears the Phosphoserine mark. ITP-binding positions include 149-152, Lys-172, and 177-178; these read FGWD and HR.

Belongs to the HAM1 NTPase family. In terms of assembly, homodimer. The cofactor is Mg(2+). Mn(2+) is required as a cofactor.

It localises to the cytoplasm. The catalysed reaction is ITP + H2O = IMP + diphosphate + H(+). It catalyses the reaction dITP + H2O = dIMP + diphosphate + H(+). It carries out the reaction XTP + H2O = XMP + diphosphate + H(+). The enzyme catalyses N(6)-hydroxy-dATP + H2O = N(6)-hydroxy-dAMP + diphosphate + H(+). Pyrophosphatase that hydrolyzes the non-canonical purine nucleotides inosine triphosphate (ITP), deoxyinosine triphosphate (dITP) as well as 2'-deoxy-N-6-hydroxylaminopurine triphosphate (dHAPTP) and xanthosine 5'-triphosphate (XTP) to their respective monophosphate derivatives. The enzyme does not distinguish between the deoxy- and ribose forms. Probably excludes non-canonical purines from RNA and DNA precursor pools, thus preventing their incorporation into RNA and DNA and avoiding chromosomal lesions. This is Inosine triphosphate pyrophosphatase (Itpa) from Mus musculus (Mouse).